Consider the following 840-residue polypeptide: Probable inorganic carbon transporter subunit DabA 2 (840 aa).

The Zn(2+) site is built by Cys356, Asp358, His540, and Cys555.

Belongs to the inorganic carbon transporter (TC 9.A.2) DabA family. Forms a complex with DabB. It depends on Zn(2+) as a cofactor.

It localises to the cell inner membrane. Functionally, part of an energy-coupled inorganic carbon pump. This is Probable inorganic carbon transporter subunit DabA 2 from Bradyrhizobium sp. (strain ORS 278).